The chain runs to 914 residues: TRPM8 channel-associated factor 3 (914 aa).

Positions 533–832 constitute a Peptidase M60 domain; the sequence is NSWVSTGLYL…TYLQLQEGFG (300 aa).

Belongs to the TCAF family. As to expression, prostate-specific. Present in both dorso-lateral and anterior prostate.

Its function is as follows. May play a role in the regulation of the cation channel TRPM8 activity. This chain is TRPM8 channel-associated factor 3, found in Mus musculus (Mouse).